The following is a 202-amino-acid chain: Translation initiation factor IF-3 (202 aa).

The segment at 172 to 202 (KTRASARHPEVPGAGSVQDIDATGDTDGSPH) is disordered.

Belongs to the IF-3 family. Monomer.

The protein resides in the cytoplasm. Functionally, IF-3 binds to the 30S ribosomal subunit and shifts the equilibrium between 70S ribosomes and their 50S and 30S subunits in favor of the free subunits, thus enhancing the availability of 30S subunits on which protein synthesis initiation begins. This is Translation initiation factor IF-3 from Mycobacterium leprae (strain TN).